A 70-amino-acid polypeptide reads, in one-letter code: Mu-agatoxin-Ao1b (70 aa).

An N-terminal signal peptide occupies residues 1–20 (MKAIIFFCFLSVMVFIVAEA). The propeptide occupies 21-33 (SSLEALKIFEGER). 4 disulfide bridges follow: Cys-35–Cys-50, Cys-42–Cys-55, Cys-49–Cys-65, and Cys-57–Cys-63. At Asn-69 the chain carries Asparagine amide.

Belongs to the neurotoxin 07 (Beta/delta-agtx) family. 04 (aga-5) subfamily. In terms of tissue distribution, expressed by the venom gland.

Its subcellular location is the secreted. Its function is as follows. Insecticidal neurotoxin that modulates the insect Nav channel (DmNaV1/tipE (para/tipE)) in a unique manner, with both the activation and inactivation processes being affected. The voltage dependence of activation is shifted toward more hyperpolarized potentials (analogous to site 4 toxins) and a non-inactivating persistent sodium current is induced (site 3-like action). Interestingly, both effects take place in a voltage-dependent manner, producing a bell-shaped curve between -80 and 0 mV. In Agelena orientalis (Funnel-web spider), this protein is Mu-agatoxin-Ao1b.